We begin with the raw amino-acid sequence, 706 residues long: Probable protein S-acyltransferase 20 (706 aa).

The next 2 helical transmembrane spans lie at 16-36 and 41-61; these read VIAITVFCLLVVAFYAFFAPF and IWEYVLIGVYSPVAILVFVLY. Residues 172–222 enclose the DHHC domain; it reads LFCTLCNCEVRKFSKHCRSCDKCVDCFDHHCKWLNNCVGRKNYVTFVSLMS. The active-site S-palmitoyl cysteine intermediate is the cysteine 202. The next 2 membrane-spanning stretches (helical) occupy residues 220-240 and 275-295; these read LMSASLLWLIIEAAVGIAVIV and AVAIFACFPLGELLFFHMLLI. 3 disordered regions span residues 470-505, 591-621, and 680-706; these read SSLSRNSFAPSQGSRDEYDTGSHGMSNLSSPSHVHE, LNPSSQTASTQNPRPILPAHDSSSGSSALRD, and RDSTSNQLPVFAPGGLGANSQTGSNIK. Polar residues-rich tracts occupy residues 492–501, 591–603, and 697–706; these read HGMSNLSSPS, LNPSSQTASTQNP, and ANSQTGSNIK.

The protein belongs to the DHHC palmitoyltransferase family.

The protein localises to the cell membrane. It is found in the cytoplasmic vesicle membrane. The enzyme catalyses L-cysteinyl-[protein] + hexadecanoyl-CoA = S-hexadecanoyl-L-cysteinyl-[protein] + CoA. Its function is as follows. Palmitoyl acyltransferase. This Arabidopsis thaliana (Mouse-ear cress) protein is Probable protein S-acyltransferase 20 (PAT20).